The following is a 345-amino-acid chain: N-acetyl-gamma-glutamyl-phosphate reductase (345 aa).

Cys149 is a catalytic residue.

The protein belongs to the NAGSA dehydrogenase family. Type 1 subfamily.

Its subcellular location is the cytoplasm. The enzyme catalyses N-acetyl-L-glutamate 5-semialdehyde + phosphate + NADP(+) = N-acetyl-L-glutamyl 5-phosphate + NADPH + H(+). The protein operates within amino-acid biosynthesis; L-arginine biosynthesis; N(2)-acetyl-L-ornithine from L-glutamate: step 3/4. Functionally, catalyzes the NADPH-dependent reduction of N-acetyl-5-glutamyl phosphate to yield N-acetyl-L-glutamate 5-semialdehyde. This is N-acetyl-gamma-glutamyl-phosphate reductase from Desulforapulum autotrophicum (strain ATCC 43914 / DSM 3382 / VKM B-1955 / HRM2) (Desulfobacterium autotrophicum).